Reading from the N-terminus, the 417-residue chain is Probable phosphoglycerate kinase (417 aa).

(2R)-3-phosphoglycerate contacts are provided by valine 23, aspartate 24, phenylalanine 25, asparagine 26, glutamine 38, arginine 39, serine 62, histidine 63, glycine 65, arginine 66, leucine 121, arginine 122, histidine 169, and arginine 170. ADP is bound at residue glycine 213. Residue glycine 213 coordinates CDP. Alanine 214 and lysine 215 together coordinate AMP. Alanine 214 is an ATP binding site. Alanine 214 is a Mg(2+) binding site. Mg(2+) contacts are provided by alanine 217 and aspartate 218. Residue aspartate 218 coordinates CDP. Lysine 219 contacts AMP. Lysine 219 is a binding site for ATP. Glycine 237 lines the ADP pocket. CDP is bound at residue glycine 237. AMP is bound by residues glycine 238 and glycine 312. 2 residues coordinate ATP: glycine 238 and glycine 312. CDP is bound by residues glycine 337, alanine 339, and phenylalanine 342. Phenylalanine 342 is a binding site for ADP. Glutamate 343 contacts AMP. ATP contacts are provided by glutamate 343, aspartate 374, and threonine 375. Aspartate 374 lines the Mg(2+) pocket.

It belongs to the phosphoglycerate kinase family. In terms of assembly, monomer. Mg(2+) serves as cofactor.

The protein resides in the cytoplasm. The catalysed reaction is (2R)-3-phosphoglycerate + ATP = (2R)-3-phospho-glyceroyl phosphate + ADP. It participates in carbohydrate degradation; glycolysis; pyruvate from D-glyceraldehyde 3-phosphate: step 2/5. This is Probable phosphoglycerate kinase (pgk-1) from Caenorhabditis elegans.